The primary structure comprises 345 residues: Protease HtpX homolog (345 aa).

2 consecutive transmembrane segments (helical) span residues 6 to 26 (TAML…LVGG) and 27 to 47 (SNGM…SYWN). Histidine 130 provides a ligand contact to Zn(2+). Residue glutamate 131 is part of the active site. Zn(2+) is bound at residue histidine 134. A run of 2 helical transmembrane segments spans residues 145–165 (LTAT…FMGG) and 179–199 (IGGL…QMAI). Glutamate 204 provides a ligand contact to Zn(2+).

Belongs to the peptidase M48B family. The cofactor is Zn(2+).

It is found in the cell inner membrane. The chain is Protease HtpX homolog from Bartonella henselae (strain ATCC 49882 / DSM 28221 / CCUG 30454 / Houston 1) (Rochalimaea henselae).